The chain runs to 349 residues: 11-beta-hydroxysteroid dehydrogenase A (349 aa).

Residues leucine 10–leucine 30 form a helical; Signal-anchor for type II membrane protein membrane-spanning segment. A Proline-knob motif is present at residues proline 13–proline 26. Residues glycine 54 to arginine 80, aspartate 105, and asparagine 132 to isoleucine 135 contribute to the NADP(+) site. Serine 184 lines the substrate pocket. The active-site Proton acceptor is the tyrosine 197. Residues tyrosine 197 to lysine 201 and lysine 201 contribute to the NADP(+) site.

Belongs to the short-chain dehydrogenases/reductases (SDR) family. Expressed in seeds (at protein level).

It is found in the lipid droplet. The protein localises to the membrane. The catalysed reaction is an 11beta-hydroxysteroid + NADP(+) = an 11-oxosteroid + NADPH + H(+). Has dehydrogenase activity against 11 beta-hydroxysteroid and 17 beta-hydroxysteroid. May be involved in signal transduction regulated by various sterols. The sequence is that of 11-beta-hydroxysteroid dehydrogenase A from Arachis hypogaea (Peanut).